The chain runs to 137 residues: Holo-[acyl-carrier-protein] synthase (137 aa).

Positions 8 and 61 each coordinate Mg(2+).

The protein belongs to the P-Pant transferase superfamily. AcpS family. It depends on Mg(2+) as a cofactor.

It localises to the cytoplasm. It carries out the reaction apo-[ACP] + CoA = holo-[ACP] + adenosine 3',5'-bisphosphate + H(+). In terms of biological role, transfers the 4'-phosphopantetheine moiety from coenzyme A to a Ser of acyl-carrier-protein. The chain is Holo-[acyl-carrier-protein] synthase from Afipia carboxidovorans (strain ATCC 49405 / DSM 1227 / KCTC 32145 / OM5) (Oligotropha carboxidovorans).